The chain runs to 192 residues: MKDKAPVSSQQDHFSRGGAVGGKPISDVRGTSRPFYRKPVSHNTIAELAEGFRVLSNGQKTISIPMKEVSALMASVGLHLSDEEFHEVMRVFGQGEQTNTEELSFKDFLSLMMCEVDDTMLEEMRGAFLHYDKQKTGFVTKKQFTELFATGGECSTPEEVEELLTIAEQDETDDKIDYNRFINELIHRLNFM.

The segment at 1 to 36 is disordered; sequence MKDKAPVSSQQDHFSRGGAVGGKPISDVRGTSRPFY. EF-hand domains are found at residues 46 to 80, 81 to 118, 119 to 154, and 155 to 190; these read AELAEGFRVLSNGQKTISIPMKEVSALMASVGLHL, SDEEFHEVMRVFGQGEQTNTEELSFKDFLSLMMCEVDD, TMLEEMRGAFLHYDKQKTGFVTKKQFTELFATGGEC, and STPEEVEELLTIAEQDETDDKIDYNRFINELIHRLN. Residues T100, E102, D107, D132, and T136 each contribute to the Ca(2+) site.

In Trypanosoma brucei brucei, this protein is EF-hand protein 5.